The sequence spans 316 residues: Ribosomal RNA large subunit methyltransferase F (316 aa).

The segment at 200–222 is disordered; it reads EEANKSTSRKVSNLNPKEKKNTN. Residues 204 to 214 are compositionally biased toward polar residues; it reads KSTSRKVSNLN.

Belongs to the methyltransferase superfamily. METTL16/RlmF family.

Its subcellular location is the cytoplasm. The enzyme catalyses adenosine(1618) in 23S rRNA + S-adenosyl-L-methionine = N(6)-methyladenosine(1618) in 23S rRNA + S-adenosyl-L-homocysteine + H(+). In terms of biological role, specifically methylates the adenine in position 1618 of 23S rRNA. The sequence is that of Ribosomal RNA large subunit methyltransferase F from Flavobacterium johnsoniae (strain ATCC 17061 / DSM 2064 / JCM 8514 / BCRC 14874 / CCUG 350202 / NBRC 14942 / NCIMB 11054 / UW101) (Cytophaga johnsonae).